The sequence spans 2224 residues: Multifunctional protein r (2224 aa).

The GATase (Glutamine amidotransferase) stretch occupies residues 1 to 369 (MASTDCYLAL…PQDTEFLFDV (369 aa)). Positions 55, 240, and 242 each coordinate L-glutamine. Residues 195–380 (RIAILDCGLK…MESIQQKDLT (186 aa)) form the Glutamine amidotransferase type-1 domain. Catalysis depends on Cys-269, which acts as the Nucleophile; for GATase activity. L-glutamine contacts are provided by Leu-270, Gln-273, Asn-311, Gly-313, and Tyr-314. Catalysis depends on for GATase activity residues His-353 and Glu-355. The linker stretch occupies residues 370–415 (FMESIQQKDLTIPQLIEQRLRPTTPAIDSAPVMPRKVLILGSGGLS). Residues 416 to 1470 (IGQAGEFDYS…KPPMKTHTDC (1055 aa)) are CPSase (Carbamoyl-phosphate synthase). Arg-525, Arg-565, Gly-571, Gly-572, Lys-602, Glu-609, Gly-635, Ile-636, His-637, Gln-678, and Glu-692 together coordinate ATP. ATP-grasp domains lie at 529 to 721 (AERV…KLAL) and 1066 to 1257 (SRML…RAIV). Positions 678, 692, and 694 each coordinate Mg(2+). Residues Gln-678, Glu-692, and Asn-694 each contribute to the Mn(2+) site. Arg-1102, Lys-1141, Leu-1143, Glu-1148, Gly-1173, Val-1174, His-1175, Ser-1176, Gln-1216, and Glu-1228 together coordinate ATP. Positions 1216, 1228, and 1230 each coordinate Mg(2+). Gln-1216, Glu-1228, and Asn-1230 together coordinate Mn(2+). The region spanning 1322-1477 (FQIPKNAVLL…TDCMTSRRIV (156 aa)) is the MGS-like domain. The segment at 1471 to 1484 (MTSRRIVKLPGFID) is linker. Residues 1485–1800 (VHVHLREPGA…GTKVKGRVHR (316 aa)) are DHOase (dihydroorotase). Residues His-1486 and His-1488 each coordinate Zn(2+). Positions 1490 and 1520 each coordinate (S)-dihydroorotate. Lys-1571, His-1605, Cys-1628, His-1629, and Glu-1652 together coordinate Zn(2+). Lys-1571 is modified (N6-carboxylysine). Arg-1676 is a binding site for (S)-dihydroorotate. Asp-1701 serves as a coordination point for Zn(2+). Catalysis depends on Asp-1701, which acts as the For DHOase activity. Positions 1705 and 1717 each coordinate (S)-dihydroorotate. Residues 1801 to 1912 (VVLRGEVAFV…QRTTNSNPVA (112 aa)) are linker. The interval 1821-1843 (GQNVRPKQSPLASEASQDLLPSD) is disordered. Ser-1883, Ser-1885, Ser-1892, and Ser-1894 each carry phosphoserine. Residues 1913–2224 (HSLMGKHILA…MVVGGRNTAL (312 aa)) are ATCase (Aspartate transcarbamylase). Carbamoyl phosphate contacts are provided by Arg-1970 and Thr-1971. Residue Lys-1998 coordinates L-aspartate. Residues Arg-2019, His-2047, and Gln-2050 each contribute to the carbamoyl phosphate site. Residues Arg-2080 and Arg-2141 each coordinate L-aspartate. Positions 2180 and 2181 each coordinate carbamoyl phosphate.

This sequence in the N-terminal section; belongs to the CarA family. In the 2nd section; belongs to the CarB family. The protein in the 3rd section; belongs to the metallo-dependent hydrolases superfamily. DHOase family. CAD subfamily. It in the C-terminal section; belongs to the aspartate/ornithine carbamoyltransferase superfamily. ATCase family. Mg(2+) is required as a cofactor. The cofactor is Mn(2+). It depends on Zn(2+) as a cofactor.

The protein localises to the cytoplasm. The catalysed reaction is hydrogencarbonate + L-glutamine + 2 ATP + H2O = carbamoyl phosphate + L-glutamate + 2 ADP + phosphate + 2 H(+). It carries out the reaction L-glutamine + H2O = L-glutamate + NH4(+). It catalyses the reaction hydrogencarbonate + NH4(+) + 2 ATP = carbamoyl phosphate + 2 ADP + phosphate + 2 H(+). The enzyme catalyses carbamoyl phosphate + L-aspartate = N-carbamoyl-L-aspartate + phosphate + H(+). The catalysed reaction is (S)-dihydroorotate + H2O = N-carbamoyl-L-aspartate + H(+). It participates in pyrimidine metabolism; UMP biosynthesis via de novo pathway; (S)-dihydroorotate from bicarbonate: step 1/3. The protein operates within pyrimidine metabolism; UMP biosynthesis via de novo pathway; (S)-dihydroorotate from bicarbonate: step 2/3. It functions in the pathway pyrimidine metabolism; UMP biosynthesis via de novo pathway; (S)-dihydroorotate from bicarbonate: step 3/3. In terms of biological role, multifunctional protein that encodes the first 3 enzymatic activities of the de novo pyrimidine pathway: carbamoylphosphate synthetase (CPSase; EC 6.3.5.5), aspartate transcarbamylase (ATCase; EC 2.1.3.2) and dihydroorotase (DHOase; EC 3.5.2.3). The CPSase-function is accomplished in 2 steps, by a glutamine-dependent amidotransferase activity (GATase) that binds and cleaves glutamine to produce ammonia, followed by an ammonium-dependent carbamoyl phosphate synthetase, which reacts with the ammonia, hydrogencarbonate and ATP to form carbamoyl phosphate. The endogenously produced carbamoyl phosphate is sequestered and channeled to the ATCase active site. ATCase then catalyzes the formation of carbamoyl-L-aspartate from L-aspartate and carbamoyl phosphate. In the last step, DHOase catalyzes the cyclization of carbamoyl aspartate to dihydroorotate. In Drosophila melanogaster (Fruit fly), this protein is Multifunctional protein r (r).